We begin with the raw amino-acid sequence, 423 residues long: Acetylornithine aminotransferase, mitochondrial (423 aa).

The N-terminal 13 residues, M1 to R13, are a transit peptide targeting the mitochondrion. N6-(pyridoxal phosphate)lysine is present on K276.

Belongs to the class-III pyridoxal-phosphate-dependent aminotransferase family. Pyridoxal 5'-phosphate serves as cofactor.

Its subcellular location is the mitochondrion matrix. It carries out the reaction N(2)-acetyl-L-ornithine + 2-oxoglutarate = N-acetyl-L-glutamate 5-semialdehyde + L-glutamate. It participates in amino-acid biosynthesis; L-arginine biosynthesis; N(2)-acetyl-L-ornithine from L-glutamate: step 4/4. Catalyzes the conversion of N-acetylglutamate-gamma-semialdehyde (NAGSA) to N-acetylornithine in arginine biosynthesis. The protein is Acetylornithine aminotransferase, mitochondrial (ARG8) of Saccharomyces cerevisiae (strain ATCC 204508 / S288c) (Baker's yeast).